A 176-amino-acid chain; its full sequence is Transcriptional repressor NrdR (176 aa).

A zinc finger spans residues 3–34; it reads CPFCQHTDSRVLESRSAEAGQSVRRRRECLQC. One can recognise an ATP-cone domain in the interval 49–139; it reads ITVIKRNQDR…VYRQFRGIRD (91 aa). The interval 151–176 is disordered; it reads GDGPLPSVLDEPYEDTAQPTIMISPQ. Polar residues predominate over residues 167–176; sequence AQPTIMISPQ.

This sequence belongs to the NrdR family. It depends on Zn(2+) as a cofactor.

Functionally, negatively regulates transcription of bacterial ribonucleotide reductase nrd genes and operons by binding to NrdR-boxes. The protein is Transcriptional repressor NrdR of Acaryochloris marina (strain MBIC 11017).